The chain runs to 208 residues: Ribonuclease HII (208 aa).

The 191-residue stretch at 18–208 (GFYAGVDEVG…RPVKERLEAC (191 aa)) folds into the RNase H type-2 domain. Aspartate 24, glutamate 25, and aspartate 116 together coordinate a divalent metal cation.

The protein belongs to the RNase HII family. The cofactor is Mn(2+). Mg(2+) serves as cofactor.

It is found in the cytoplasm. The catalysed reaction is Endonucleolytic cleavage to 5'-phosphomonoester.. Functionally, endonuclease that specifically degrades the RNA of RNA-DNA hybrids. This is Ribonuclease HII from Shewanella loihica (strain ATCC BAA-1088 / PV-4).